Here is a 362-residue protein sequence, read N- to C-terminus: H-2 class I histocompatibility antigen, L-D alpha chain (362 aa).

An N-terminal signal peptide occupies residues 1-24 (MGAMAPRTLLLLLAAALAPTQTRA). The interval 25 to 114 (GPHSMRYFET…LLGYYNQSAG (90 aa)) is alpha-1. Residues 25–309 (GPHSMRYFET…PPPSTDSYMV (285 aa)) lie on the Extracellular side of the membrane. N-linked (GlcNAc...) asparagine glycosylation occurs at Asn110. Residues 115 to 206 (GTHTLQWMYG…KNGNATLLRT (92 aa)) are alpha-2. Cys125 and Cys188 form a disulfide bridge. 2 N-linked (GlcNAc...) asparagine glycosylation sites follow: Asn200 and Asn280. Positions 207–298 (DSPKAHVTHH…GLPEPLTLRW (92 aa)) are alpha-3. The Ig-like C1-type domain occupies 209–297 (PKAHVTHHPR…EGLPEPLTLR (89 aa)). Cys227 and Cys283 are oxidised to a cystine. The interval 299–309 (EPPPSTDSYMV) is connecting peptide. The helical transmembrane segment at 310–331 (IVAVLGVLGAMAIIGAVVAFVM) threads the bilayer. Over 332 to 362 (KRRRNTGGKGGDYALAPGSQSSEMSLRDCKA) the chain is Cytoplasmic. Residues 340–362 (KGGDYALAPGSQSSEMSLRDCKA) are disordered. A phosphoserine mark is found at Ser353 and Ser356.

This sequence belongs to the MHC class I family. Heterodimer of an alpha chain and a beta chain (beta-2-microglobulin).

Its subcellular location is the membrane. Involved in the presentation of foreign antigens to the immune system. This Mus musculus (Mouse) protein is H-2 class I histocompatibility antigen, L-D alpha chain (H2-L).